Here is a 123-residue protein sequence, read N- to C-terminus: Diacylglycerol kinase (123 aa).

The chain crosses the membrane as a helical span at residues 15–32 (ILNATGYSLAGFLAAFRG). Glu33 contacts a divalent metal cation. Transmembrane regions (helical) follow at residues 35 to 55 (AFRQ…LLDV), 61 to 81 (ALMI…SAIE), and 102 to 122 (GSAA…TILL). Glu74 serves as the catalytic Proton acceptor. Residue Glu81 coordinates a divalent metal cation.

Belongs to the bacterial diacylglycerol kinase family. It depends on Mg(2+) as a cofactor.

Its subcellular location is the cell inner membrane. The catalysed reaction is a 1,2-diacyl-sn-glycerol + ATP = a 1,2-diacyl-sn-glycero-3-phosphate + ADP + H(+). Its function is as follows. Catalyzes the ATP-dependent phosphorylation of sn-l,2-diacylglycerol (DAG) to phosphatidic acid. Involved in the recycling of diacylglycerol produced as a by-product during membrane-derived oligosaccharide (MDO) biosynthesis. In Pseudomonas aeruginosa (strain ATCC 15692 / DSM 22644 / CIP 104116 / JCM 14847 / LMG 12228 / 1C / PRS 101 / PAO1), this protein is Diacylglycerol kinase (dgkA).